The chain runs to 173 residues: Protein tyrosine phosphatase type IVA 1 (173 aa).

A Tyrosine-protein phosphatase domain is found at 8-161 (APVEVTYKNM…YRPKMRLRFK (154 aa)). A disulfide bridge connects residues cysteine 49 and cysteine 104. Aspartate 72 (proton donor) is an active-site residue. The tract at residues 97-132 (GCCIAVHCVAGLGRAPVLVALALIEGGMKYEDAVQF) is interaction with ATF5. Cysteine 104 serves as the catalytic Phosphocysteine intermediate. Phosphate is bound at residue 105–110 (VAGLGR). Arginine 110 contacts substrate. Cysteine 170 is subject to Cysteine methyl ester. Cysteine 170 is lipidated: S-farnesyl cysteine. Positions 171 to 173 (CIQ) are cleaved as a propeptide — removed in mature form.

It belongs to the protein-tyrosine phosphatase family. In terms of assembly, homotrimer. Interacts with ATF5 and tubulin. Post-translationally, farnesylated. Farnesylation is required for membrane targeting.

The protein resides in the cell membrane. It is found in the early endosome. The protein localises to the endoplasmic reticulum. Its subcellular location is the cytoplasm. It localises to the cytoskeleton. The protein resides in the spindle. It is found in the nucleus. The enzyme catalyses O-phospho-L-tyrosyl-[protein] + H2O = L-tyrosyl-[protein] + phosphate. Its activity is regulated as follows. Inhibited by sodium orthovanadate and pentamidine. Its function is as follows. Protein tyrosine phosphatase which stimulates progression from G1 into S phase during mitosis. May play a role in the development and maintenance of differentiating epithelial tissues. This is Protein tyrosine phosphatase type IVA 1 (PTP4A1) from Pongo abelii (Sumatran orangutan).